Here is a 717-residue protein sequence, read N- to C-terminus: Cleavage stimulation factor subunit 3 (717 aa).

S2 is modified (N-acetylserine). HAT repeat units lie at residues 45–77 (QPID…AEIK), 79–110 (KNYD…YVRE), 117–152 (SYKE…FLKG), 163–196 (QRIT…YEEG), 221–261 (KEYE…WEKS), 271–303 (LITK…YLEQ), 319–352 (LFSD…YEES), 354–387 (MKYE…FARR), and 458–494 (NEDN…FESN). The tract at residues 683-704 (AVKRPNEDSDEDEEKGAVVPPV) is disordered. The residue at position 691 (S691) is a Phosphoserine.

Homodimer. The CSTF complex is composed of CSTF1 (50 kDa subunit), CSTF2 (64 kDa subunit) and CSTF3 (77 kDa subunit). CSTF3 directly interacts with CSTF1 and CSTF2. Interacts with FIP1L1.

It is found in the nucleus. In terms of biological role, one of the multiple factors required for polyadenylation and 3'-end cleavage of mammalian pre-mRNAs. This Mus musculus (Mouse) protein is Cleavage stimulation factor subunit 3 (Cstf3).